Here is a 318-residue protein sequence, read N- to C-terminus: Probable cell division protein WhiA (318 aa).

The segment at residues 281–314 is a DNA-binding region (H-T-H motif); sequence SLKELGQMLVPPVGKSGVNHRLRKIEEISKKLKE.

It belongs to the WhiA family.

Its function is as follows. Involved in cell division and chromosome segregation. This Thermoanaerobacter pseudethanolicus (strain ATCC 33223 / 39E) (Clostridium thermohydrosulfuricum) protein is Probable cell division protein WhiA.